The primary structure comprises 92 residues: Transcription factor S4 (92 aa).

Residues 1-31 (MRFCPKCGSFLKVKGNKMVCSKCGYSDHDVE) form a ZR-N region. Cys-4, Cys-7, Cys-20, and Cys-23 together coordinate Zn(2+). The tract at residues 32–56 (KVILKENVAHENDKTIIADGETIEG) is flexible linker. The tract at residues 55 to 92 (EGRVAISLCPRCGSVRAILLNKKKRLYRCMTCNFVYNI) is ZR-C. Zn(2+) is bound by residues Cys-63 and Cys-66. Residues Lys-76, Lys-77, and Lys-78 contribute to the active site. Cys-83 and Cys-86 together coordinate Zn(2+).

The protein belongs to the archaeal RpoM/eukaryotic RPA12/RPB9/RPC11 RNA polymerase family. As to quaternary structure, interacts with RNA polymerase. Zn(2+) is required as a cofactor.

A potent inhibitor of RNA polymerase (RNAP) probably involved in viral defense. Destabilizes the transcription pre-initiation complex of TBP, TFB, DNA and RNAP, inhibits abortive transcription initiation, productive initiation and transcription elongation. Increases the RNAP KM for NTPs about 50-fold. Overexpression of TFS1-tip4 (TFS1 with the active tip of this protein, phenocopies this protein) in S.acidocaldarius MW001 leads to severe growth inhibition. When bound to RNAP induces conformational changes that widen the DNA-binding channel, probably destabilizing the interaction of DNA with RNAP. This chain is Transcription factor S4, found in Saccharolobus solfataricus (strain ATCC 35092 / DSM 1617 / JCM 11322 / P2) (Sulfolobus solfataricus).